Consider the following 132-residue polypeptide: Small ribosomal subunit protein uS8 (132 aa).

It belongs to the universal ribosomal protein uS8 family. In terms of assembly, part of the 30S ribosomal subunit. Contacts proteins S5 and S12.

In terms of biological role, one of the primary rRNA binding proteins, it binds directly to 16S rRNA central domain where it helps coordinate assembly of the platform of the 30S subunit. The chain is Small ribosomal subunit protein uS8 from Mycoplasmopsis synoviae (strain 53) (Mycoplasma synoviae).